Here is a 351-residue protein sequence, read N- to C-terminus: Translation initiation factor eIF2B subunit beta (351 aa).

Belongs to the eIF-2B alpha/beta/delta subunits family. As to quaternary structure, component of the translation initiation factor 2B (eIF2B) complex which is a heterodecamer of two sets of five different subunits: alpha, beta, gamma, delta and epsilon. Subunits alpha, beta and delta comprise a regulatory subcomplex and subunits epsilon and gamma comprise a catalytic subcomplex. Within the complex, the hexameric regulatory complex resides at the center, with the two heterodimeric catalytic subcomplexes bound on opposite sides.

It is found in the cytoplasm. Its subcellular location is the cytosol. With respect to regulation, activated by the chemical integrated stress response (ISR) inhibitor ISRIB which stimulates guanine nucleotide exchange factor activity for both phosphorylated and unphosphorylated eIF2. Acts as a component of the translation initiation factor 2B (eIF2B) complex, which catalyzes the exchange of GDP for GTP on eukaryotic initiation factor 2 (eIF2) gamma subunit. Its guanine nucleotide exchange factor activity is repressed when bound to eIF2 complex phosphorylated on the alpha subunit, thereby limiting the amount of methionyl-initiator methionine tRNA available to the ribosome and consequently global translation is repressed. The polypeptide is Translation initiation factor eIF2B subunit beta (Eif2b2) (Rattus norvegicus (Rat)).